The following is a 493-amino-acid chain: MFS-type transporter efuF (493 aa).

11 consecutive transmembrane segments (helical) span residues 90 to 110 (ITLV…NMLL), 117 to 137 (IMLP…CAVH), 147 to 167 (LLMG…LTTF), 179 to 199 (IFYG…YGVF), 211 to 231 (FLMI…YWHL), 279 to 299 (IALY…VGNF), 316 to 336 (LYTV…CTSS), 343 to 363 (STHL…LITL), 370 to 390 (GPTY…SCIF), 406 to 426 (AVTG…SLAF), and 435 to 455 (IPAL…VLGF).

This sequence belongs to the major facilitator superfamily.

It is found in the membrane. MFS-type transporter; part of the gene cluster that mediates the biosynthesis of enfumafungin, a glycosylated fernene-type triterpenoid with potent antifungal activity, mediated by its interaction with beta-1,3-glucan synthase and the fungal cell wall. Might facilitate the transport of glucose units to the subcellular site of enfumafungin biosynthesis. The chain is MFS-type transporter efuF from Hormonema carpetanum.